Here is a 289-residue protein sequence, read N- to C-terminus: MLKNLFRKTKYITVSQKNIENYKRENTPTIPDGMWVKCNKCGEILYQNDLEKNYMVCNLCGNHFRIGVKERIKYLFDKDTFKEWDYKIKTENPLDFKGYDEKIEHIKEKTNLSEAVTTGKCKIAGMEVVVCIMDSKFMMGSMGSVVGEKITRAIERAIGLRLPVIIFTASGGARMQEGILSLMQMAKVSSALAKLDEEGLLYICVLTDPTTGGVTASFAMLGDIILAEPDALIGFAGKRVIEQTINEKLPEDFQKSEFLLEHGFIDKIVPRSDLRKVLAKLINMHQNSF.

The region spanning 34–289 (MWVKCNKCGE…KLINMHQNSF (256 aa)) is the CoA carboxyltransferase N-terminal domain. 4 residues coordinate Zn(2+): C38, C41, C57, and C60. A C4-type zinc finger spans residues 38–60 (CNKCGEILYQNDLEKNYMVCNLC).

The protein belongs to the AccD/PCCB family. As to quaternary structure, acetyl-CoA carboxylase is a heterohexamer composed of biotin carboxyl carrier protein (AccB), biotin carboxylase (AccC) and two subunits each of ACCase subunit alpha (AccA) and ACCase subunit beta (AccD). Requires Zn(2+) as cofactor.

The protein localises to the cytoplasm. The enzyme catalyses N(6)-carboxybiotinyl-L-lysyl-[protein] + acetyl-CoA = N(6)-biotinyl-L-lysyl-[protein] + malonyl-CoA. It functions in the pathway lipid metabolism; malonyl-CoA biosynthesis; malonyl-CoA from acetyl-CoA: step 1/1. Its function is as follows. Component of the acetyl coenzyme A carboxylase (ACC) complex. Biotin carboxylase (BC) catalyzes the carboxylation of biotin on its carrier protein (BCCP) and then the CO(2) group is transferred by the transcarboxylase to acetyl-CoA to form malonyl-CoA. The polypeptide is Acetyl-coenzyme A carboxylase carboxyl transferase subunit beta (Clostridium botulinum (strain ATCC 19397 / Type A)).